The chain runs to 294 residues: UDP-3-O-acyl-N-acetylglucosamine deacetylase (294 aa).

3 residues coordinate Zn(2+): His75, His232, and Asp236. Catalysis depends on His259, which acts as the Proton donor.

Belongs to the LpxC family. The cofactor is Zn(2+).

The catalysed reaction is a UDP-3-O-[(3R)-3-hydroxyacyl]-N-acetyl-alpha-D-glucosamine + H2O = a UDP-3-O-[(3R)-3-hydroxyacyl]-alpha-D-glucosamine + acetate. It functions in the pathway glycolipid biosynthesis; lipid IV(A) biosynthesis; lipid IV(A) from (3R)-3-hydroxytetradecanoyl-[acyl-carrier-protein] and UDP-N-acetyl-alpha-D-glucosamine: step 2/6. In terms of biological role, catalyzes the hydrolysis of UDP-3-O-myristoyl-N-acetylglucosamine to form UDP-3-O-myristoylglucosamine and acetate, the committed step in lipid A biosynthesis. In Campylobacter jejuni subsp. jejuni serotype O:2 (strain ATCC 700819 / NCTC 11168), this protein is UDP-3-O-acyl-N-acetylglucosamine deacetylase.